The chain runs to 224 residues: Casparian strip membrane protein 3 (224 aa).

The segment at 1-30 (MESKKEGVASAPTSPESRRTRSNGKGKTIA) is disordered. Topologically, residues 1 to 57 (MESKKEGVASAPTSPESRRTRSNGKGKTIAEATPPSVTVVSTKVTPSPRGGWRKGAA) are cytoplasmic. The chain crosses the membrane as a helical span at residues 58-78 (ILDFILRLGAISSAIGAAAVM). Over 79-105 (GNNEQILPFFTQFFQFHVQWDDFPMFQ) the chain is Extracellular. Residues 106 to 126 (FFVFANGAAVVFLILSLPFSI) traverse the membrane as a helical segment. The Cytoplasmic portion of the chain corresponds to 127 to 138 (VCIVRPFAVGPR). The chain crosses the membrane as a helical span at residues 139–159 (LLLVIVDIFAMALVIAAASAA). Residues 160–191 (AAVVYLAHNGSQDANWIAICQQYTDFCQVTSQ) lie on the Extracellular side of the membrane. An N-linked (GlcNAc...) asparagine glycan is attached at asparagine 168. A helical transmembrane segment spans residues 192–212 (AVVASFVAAVFLICLIVLSSV). Topologically, residues 213 to 224 (ALKKGLKREFGW) are cytoplasmic.

It belongs to the Casparian strip membrane proteins (CASP) family. As to quaternary structure, homodimer and heterodimers.

It localises to the cell membrane. Regulates membrane-cell wall junctions and localized cell wall deposition. Required for establishment of the Casparian strip membrane domain (CSD) and the subsequent formation of Casparian strips, a cell wall modification of the root endodermis that determines an apoplastic barrier between the intraorganismal apoplasm and the extraorganismal apoplasm and prevents lateral diffusion. The chain is Casparian strip membrane protein 3 from Vigna unguiculata (Cowpea).